Consider the following 136-residue polypeptide: Small ribosomal subunit protein bS6 (136 aa).

Basic and acidic residues predominate over residues Glu97–Glu128. The tract at residues Glu97 to Glu136 is disordered.

Belongs to the bacterial ribosomal protein bS6 family.

Functionally, binds together with bS18 to 16S ribosomal RNA. The sequence is that of Small ribosomal subunit protein bS6 from Bartonella bacilliformis (strain ATCC 35685 / KC583 / Herrer 020/F12,63).